A 165-amino-acid polypeptide reads, in one-letter code: Coatomer subunit zeta (165 aa).

The protein belongs to the adaptor complexes small subunit family. In terms of assembly, oligomeric complex that consists of at least the alpha, beta, beta', gamma, delta, epsilon and zeta subunits.

The protein localises to the cytoplasm. It is found in the golgi apparatus membrane. It localises to the cytoplasmic vesicle. Its subcellular location is the COPI-coated vesicle membrane. In terms of biological role, the coatomer is a cytosolic protein complex that binds to dilysine motifs and reversibly associates with Golgi non-clathrin-coated vesicles, which further mediate biosynthetic protein transport from the ER, via the Golgi up to the trans Golgi network. Coatomer complex is required for budding from Golgi membranes, and is essential for the retrograde Golgi-to-ER transport of dilysine-tagged proteins. The zeta subunit may be involved in regulating the coat assembly and, hence, the rate of biosynthetic protein transport due to its association-dissociation properties with the coatomer complex. The sequence is that of Coatomer subunit zeta from Encephalitozoon cuniculi (strain GB-M1) (Microsporidian parasite).